The following is a 378-amino-acid chain: 1-acyl-sn-glycerol-3-phosphate acyltransferase delta (378 aa).

Residues 11–31 (FLCHLVFCYVFIASGLIINTV) form a helical membrane-spanning segment. The HXXXXD motif signature appears at 96 to 101 (HKFEID). The next 3 membrane-spanning stretches (helical) occupy residues 125–145 (ELAY…VFCS), 307–327 (TLVN…QFLV), and 338–358 (LASF…MIGV).

Belongs to the 1-acyl-sn-glycerol-3-phosphate acyltransferase family.

Its subcellular location is the endoplasmic reticulum membrane. The catalysed reaction is a 1-acyl-sn-glycero-3-phosphate + an acyl-CoA = a 1,2-diacyl-sn-glycero-3-phosphate + CoA. The enzyme catalyses (4Z,7Z,10Z,13Z,16Z,19Z)-docosahexaenoyl-CoA + 1-hexadecanoyl-sn-glycero-3-phosphate = 1-hexadecanoyl-2-(4Z,7Z,10Z,13Z,16Z,19Z-docosahexaenoyl)-sn-glycero-3-phosphate + CoA. It carries out the reaction 1-octadecanoyl-sn-glycero-3-phosphate + (9Z,12Z)-octadecadienoyl-CoA = 1-octadecanoyl-2-(9Z,12Z-octadecadienoyl)-sn-glycero-3-phosphate + CoA. It catalyses the reaction 1-octadecanoyl-sn-glycero-3-phosphate + (4Z,7Z,10Z,13Z,16Z,19Z)-docosahexaenoyl-CoA = 1-octadecanoyl-2-(4Z,7Z,10Z,13Z,16Z,19Z-docosahexaenoyl)-sn-glycero-3-phosphate + CoA. The catalysed reaction is (4Z,7Z,10Z,13Z,16Z,19Z)-docosahexaenoyl-CoA + 1-(9Z-octadecenoyl)-sn-glycero-3-phosphate = 1-(9Z-octadecenoyl)-2-(4Z,7Z,10Z,13Z,16Z,19Z-docosahexaenoyl)-sn-glycero-3-phosphate + CoA. The protein operates within phospholipid metabolism; CDP-diacylglycerol biosynthesis; CDP-diacylglycerol from sn-glycerol 3-phosphate: step 2/3. Converts 1-acyl-sn-glycerol-3-phosphate (lysophosphatidic acid or LPA) into 1,2-diacyl-sn-glycerol-3-phosphate (phosphatidic acid or PA) by incorporating an acyl moiety at the sn-2 position of the glycerol backbone. Exhibits high acyl-CoA specificity for polyunsaturated fatty acyl-CoA, especially docosahexaenoyl-CoA (22:6-CoA, DHA-CoA). This Macaca fascicularis (Crab-eating macaque) protein is 1-acyl-sn-glycerol-3-phosphate acyltransferase delta (AGPAT4).